Reading from the N-terminus, the 172-residue chain is Carotene biosynthesis-related protein CBR, chloroplastic (172 aa).

Positions 41 to 66 are disordered; sequence AENNPSTPPPSSPSPPPPPPTPAAPT. A compositionally biased stretch (pro residues) spans 46-63; that stretch reads STPPPSSPSPPPPPPTPA. 2 consecutive transmembrane segments (helical) span residues 111 to 131 and 152 to 172; these read PTLI…PAFA and FAMI…IALF.

The protein belongs to the ELIP/psbS family.

It is found in the plastid. The protein localises to the chloroplast membrane. Its function is as follows. Putative zeaxanthin binding protein. That forms photoprotective complexes within the light-harvesting antennae. This chain is Carotene biosynthesis-related protein CBR, chloroplastic (CBR), found in Dunaliella salina (Green alga).